Reading from the N-terminus, the 1979-residue chain is E3 ubiquitin-protein ligase TTC3 (1979 aa).

The interval 1 to 230 (MDDFAEGGLS…RHSCMQCVKQ (230 aa)) is interaction with POLG. 2 TPR repeats span residues 231 to 264 (GELM…RPEN) and 266 to 298 (LLYG…KNTW). At serine 378 the chain carries Phosphoserine. The segment at 422-457 (CDCHPEFLPPPSQPPRHKGKQKSRNNESEKPSFNSE) is disordered. TPR repeat units lie at residues 536–572 (VLVV…YPNE) and 576–609 (CLAY…ISRL). The disordered stretch occupies residues 783–811 (LAQERMEEDLRESNPPKNEEPEETSDSAQ). Phosphoserine is present on serine 1009. Disordered stretches follow at residues 1021 to 1067 (NKGK…GPFA), 1214 to 1289 (QPDV…EEAK), 1402 to 1427 (QGSA…SSDS), 1574 to 1601 (KNDG…DEKT), 1757 to 1776 (MDSA…GSPT), 1788 to 1821 (KGAS…KKPS), and 1873 to 1927 (DEQK…PAPD). Over residues 1036-1050 (VGSGAASVAPSSEAV) the composition is skewed to low complexity. Position 1060 is a phosphoserine (serine 1060). The span at 1214–1227 (QPDVKSEALSEDVK) shows a compositional bias: basic and acidic residues. Residues 1248–1257 (DSDSSSGSAS) are compositionally biased toward low complexity. Basic and acidic residues predominate over residues 1576–1586 (DGFDKECEPHP). Composition is skewed to polar residues over residues 1788–1799 (KGASQVSPSEQS) and 1808–1821 (GQAT…KKPS). A Phosphoserine modification is found at serine 1794. Over residues 1873–1890 (DEQKKKKPNPGKDKKTSE) the composition is skewed to basic and acidic residues. The segment at 1931 to 1971 (CEICHEIFKSKNMRVLKCGHKFHKGCFKQWLKGQSTCPTCG) adopts an RING-type; atypical zinc-finger fold.

As to quaternary structure, interacts (when phosphorylated on Ser-378) with AKT1, AKT2 and AKT3 (when phosphorylated). Interacts with CIT. Interacts with POLG. Interacts with HSP70. Interacts with SMURF2. Phosphorylation on Ser-378 by Akt is required for ubiquitin ligase activity. Post-translationally, proteolytically cleaved into differently sized N- and C-terminal fragments.

The protein resides in the nucleus. It is found in the cytoplasm. The protein localises to the golgi apparatus. It catalyses the reaction S-ubiquitinyl-[E2 ubiquitin-conjugating enzyme]-L-cysteine + [acceptor protein]-L-lysine = [E2 ubiquitin-conjugating enzyme]-L-cysteine + N(6)-ubiquitinyl-[acceptor protein]-L-lysine.. It participates in protein modification; protein ubiquitination. E3 ubiquitin-protein ligase which catalyzes the formation of 'Lys-48'-polyubiquitin chains. Mediates the ubiquitination and subsequent degradation of phosphorylated Akt (AKT1, AKT2 and AKT3) in the nucleus. Acts as a terminal regulator of Akt signaling after activation; its phosphorylation by Akt, which is a prerequisite for ubiquitin ligase activity, suggests the existence of a regulation mechanism required to control Akt levels after activation. Positively regulates TGFB1-induced epithelial-mesenchymal transition and myofibroblast differentiation by mediating the ubiquitination and subsequent degradation of SMURF2. Regulates neuronal differentiation by regulating actin remodeling and Golgi organization via a signaling cascade involving RHOA, CIT and ROCK. Inhibits cell proliferation. The polypeptide is E3 ubiquitin-protein ligase TTC3 (Ttc3) (Mus musculus (Mouse)).